Here is a 105-residue protein sequence, read N- to C-terminus: uncharacterized protein (105 aa).

Residues 1–48 (MAPKAFFVCLPWVLPRHALIVRQAGNPYHFLAYTNPRAPGKLQDSHCP) are Extracellular-facing. Residues 49–69 (VFFMGIIIITIITVTLAIIII) traverse the membrane as a helical segment. Position 70 (Asn70) is a topological domain, cytoplasmic. Residues 71–91 (IIFLTLFDDGMCFYCSLLTFS) form a helical membrane-spanning segment. Residues 92 to 105 (FVSFNFDHFDHFDL) lie on the Extracellular side of the membrane.

The protein resides in the membrane. This is an uncharacterized protein from Saccharomyces cerevisiae (strain ATCC 204508 / S288c) (Baker's yeast).